Consider the following 268-residue polypeptide: Universal stress protein MT3220 (268 aa).

Residues Gly13, 107 to 113 (GSVGLDH), Arg117, and 120 to 121 (SV) contribute to the ATP site.

This sequence belongs to the universal stress protein A family.

The chain is Universal stress protein MT3220 from Mycobacterium tuberculosis (strain CDC 1551 / Oshkosh).